We begin with the raw amino-acid sequence, 267 residues long: tRNA pseudouridine synthase A (267 aa).

Catalysis depends on Asp54, which acts as the Nucleophile. Residue Tyr114 participates in substrate binding.

This sequence belongs to the tRNA pseudouridine synthase TruA family. As to quaternary structure, homodimer.

The catalysed reaction is uridine(38/39/40) in tRNA = pseudouridine(38/39/40) in tRNA. Formation of pseudouridine at positions 38, 39 and 40 in the anticodon stem and loop of transfer RNAs. The chain is tRNA pseudouridine synthase A from Tropheryma whipplei (strain TW08/27) (Whipple's bacillus).